A 93-amino-acid polypeptide reads, in one-letter code: Parbolysin P1 (93 aa).

3 disulfides stabilise this stretch: C16–C37, C22–C33, and C47–C60.

Belongs to the worm cytolysin family. In terms of tissue distribution, localized within the skin and proboscis and are most readily isolated from body mucus secretions.

It localises to the secreted. Its function is as follows. Cytolysin that shows hemolytic activity (on bovine erythrocytes, HC(50)=5.75 mg/ml). This hemolytic activity is completely inhibited by small unilamelar vesicles composed of PC/PG, PC/PI and PC/PS in 1:1 molar ratios (with at least 100 mg/ml concentration). The recombinant protein does not show hemolytic activity, suggesting that it is not properly folded or that it requires a free N-terminal end for its activity. The protein is Parbolysin P1 of Parborlasia corrugatus (Antarctic nemertean worm).